A 205-amino-acid chain; its full sequence is Outer-membrane lipoprotein carrier protein (205 aa).

The signal sequence occupies residues 1 to 19 (MKKIIICFIFVFSINVSFA).

It belongs to the LolA family. As to quaternary structure, monomer.

It localises to the periplasm. In terms of biological role, participates in the translocation of lipoproteins from the inner membrane to the outer membrane. Only forms a complex with a lipoprotein if the residue after the N-terminal Cys is not an aspartate (The Asp acts as a targeting signal to indicate that the lipoprotein should stay in the inner membrane). The chain is Outer-membrane lipoprotein carrier protein from Francisella tularensis subsp. holarctica (strain LVS).